Reading from the N-terminus, the 170-residue chain is uncharacterized protein (170 aa).

This is an uncharacterized protein from Myxococcus xanthus.